Consider the following 126-residue polypeptide: MSALDDSIRVEVKTEYIEQQSSPEDQKYLFSYTITIVNLGEQAAKLETRHWIITDANGKISEVQGAGVVGETPTIPPNTAYQYTSGTVLDTPLGIMYGTYGMVSESGERFKATIKPFRLALPGLLH.

Positions 2-126 constitute an ApaG domain; it reads SALDDSIRVE…FRLALPGLLH (125 aa).

This chain is Protein ApaG, found in Shewanella sp. (strain MR-4).